Reading from the N-terminus, the 367-residue chain is 2-aminoethylphosphonate--pyruvate transaminase (367 aa).

The residue at position 193 (Lys193) is an N6-(pyridoxal phosphate)lysine.

Belongs to the class-V pyridoxal-phosphate-dependent aminotransferase family. PhnW subfamily. In terms of assembly, homodimer. Requires pyridoxal 5'-phosphate as cofactor.

The catalysed reaction is (2-aminoethyl)phosphonate + pyruvate = phosphonoacetaldehyde + L-alanine. In terms of biological role, involved in phosphonate degradation. In Vibrio parahaemolyticus serotype O3:K6 (strain RIMD 2210633), this protein is 2-aminoethylphosphonate--pyruvate transaminase.